The sequence spans 336 residues: Fructokinase-2 (336 aa).

The protein belongs to the carbohydrate kinase PfkB family. As to expression, expressed in stem, sheaths, anthers, and panicles (at protein level).

The enzyme catalyses D-fructose + ATP = D-fructose 6-phosphate + ADP + H(+). It functions in the pathway glycan biosynthesis; starch biosynthesis. Its activity is regulated as follows. Strongly inhibited at high fructose concentration. May play an important role in maintaining the flux of carbon towards starch formation in endosperm. May also be involved in a sugar-sensing pathway. The sequence is that of Fructokinase-2 (FRK2) from Oryza sativa subsp. japonica (Rice).